A 365-amino-acid polypeptide reads, in one-letter code: tRNA/tmRNA (uracil-C(5))-methyltransferase (365 aa).

5 residues coordinate S-adenosyl-L-methionine: Gln-189, Tyr-217, Asn-222, Glu-238, and Asp-298. The Nucleophile role is filled by Cys-323. The Proton acceptor role is filled by Glu-357.

It belongs to the class I-like SAM-binding methyltransferase superfamily. RNA M5U methyltransferase family. TrmA subfamily.

The catalysed reaction is uridine(54) in tRNA + S-adenosyl-L-methionine = 5-methyluridine(54) in tRNA + S-adenosyl-L-homocysteine + H(+). The enzyme catalyses uridine(341) in tmRNA + S-adenosyl-L-methionine = 5-methyluridine(341) in tmRNA + S-adenosyl-L-homocysteine + H(+). In terms of biological role, dual-specificity methyltransferase that catalyzes the formation of 5-methyluridine at position 54 (m5U54) in all tRNAs, and that of position 341 (m5U341) in tmRNA (transfer-mRNA). The protein is tRNA/tmRNA (uracil-C(5))-methyltransferase of Proteus mirabilis (strain HI4320).